We begin with the raw amino-acid sequence, 386 residues long: Protein phosphatase methylesterase 1 (386 aa).

The interval 1-38 is disordered; that stretch reads MSALEKSMHLGRLPSRPPLPGSGGSQSGAKMRMGPGRK. A Phosphoserine modification is found at serine 15. The residue at position 16 (arginine 16) is an Asymmetric dimethylarginine; alternate. At arginine 16 the chain carries Omega-N-methylarginine; alternate. The active site involves serine 156. Acidic residues predominate over residues 255–265; the sequence is IEEEEEDEEGS. Positions 255–280 are disordered; it reads IEEEEEDEEGSESVNKRKKEDDMETK. Residues 268–280 show a composition bias toward basic and acidic residues; the sequence is VNKRKKEDDMETK. The active site involves histidine 349.

It belongs to the AB hydrolase superfamily. In terms of assembly, binds PPP2CA and PPP2CB. Post-translationally, phosphorylated by SIK1 following increases in intracellular sodium, leading to dissociation from the protein phosphatase 2A (PP2A) complex and subsequent dephosphorylation of sodium/potassium-transporting ATPase ATP1A1.

The enzyme catalyses [phosphatase 2A protein]-C-terminal L-leucine methyl ester + H2O = [phosphatase 2A protein]-C-terminal L-leucine + methanol + H(+). Functionally, demethylates proteins that have been reversibly carboxymethylated. Demethylates PPP2CB (in vitro) and PPP2CA. Binding to PPP2CA displaces the manganese ion and inactivates the enzyme. In Rattus norvegicus (Rat), this protein is Protein phosphatase methylesterase 1 (Ppme1).